Here is a 457-residue protein sequence, read N- to C-terminus: Phosphomethylpyrimidine synthase (457 aa).

Substrate is bound by residues asparagine 81, methionine 110, tyrosine 139, histidine 175, 195 to 197 (SRG), 236 to 239 (DALR), and glutamate 275. Residue histidine 279 participates in Zn(2+) binding. Tyrosine 302 is a binding site for substrate. Position 343 (histidine 343) interacts with Zn(2+). Positions 423, 426, and 431 each coordinate [4Fe-4S] cluster.

This sequence belongs to the ThiC family. [4Fe-4S] cluster is required as a cofactor.

The catalysed reaction is 5-amino-1-(5-phospho-beta-D-ribosyl)imidazole + S-adenosyl-L-methionine = 4-amino-2-methyl-5-(phosphooxymethyl)pyrimidine + CO + 5'-deoxyadenosine + formate + L-methionine + 3 H(+). It participates in cofactor biosynthesis; thiamine diphosphate biosynthesis. In terms of biological role, catalyzes the synthesis of the hydroxymethylpyrimidine phosphate (HMP-P) moiety of thiamine from aminoimidazole ribotide (AIR) in a radical S-adenosyl-L-methionine (SAM)-dependent reaction. This is Phosphomethylpyrimidine synthase from Aquifex aeolicus (strain VF5).